Reading from the N-terminus, the 221-residue chain is MASLKSIIRQGKQTRSDLKKLRNTGKVPAVVYGYGTKNTSVKVDEVEFIKVIREVGRNGVIDLGVGSKSIKVMVSDYQFDPLKNQITHIDFLAINMTEERTVDVPVHLVGEAAGAKEGGVVEQPLFDLQVTATPENIPESIEVDITELEVNDSYSVSDIKVSGDFTIENDPEESVVTVVPPTDEPTEEEVEAMEGEAATEEPEVVGEEKEEDSEEENKDEE.

The interval 174-221 is disordered; the sequence is SVVTVVPPTDEPTEEEVEAMEGEAATEEPEVVGEEKEEDSEEENKDEE. Over residues 184-221 the composition is skewed to acidic residues; that stretch reads EPTEEEVEAMEGEAATEEPEVVGEEKEEDSEEENKDEE.

It belongs to the bacterial ribosomal protein bL25 family. CTC subfamily. In terms of assembly, part of the 50S ribosomal subunit; part of the 5S rRNA/L5/L18/L25 subcomplex. Contacts the 5S rRNA. Binds to the 5S rRNA independently of L5 and L18.

In terms of biological role, this is one of the proteins that binds to the 5S RNA in the ribosome where it forms part of the central protuberance. The sequence is that of Large ribosomal subunit protein bL25 from Staphylococcus haemolyticus (strain JCSC1435).